We begin with the raw amino-acid sequence, 1318 residues long: Ubiquitin carboxyl-terminal hydrolase 19 (1318 aa).

Residues 1–109 (MSGGASATGP…GACEDPHDLL (109 aa)) are disordered. At 1-1291 (MSGGASATGP…TTPDEGCLRY (1291 aa)) the chain is on the cytoplasmic side. Residues 28–44 (DRANQESKDGDPRKETG) show a composition bias toward basic and acidic residues. Residues 83–94 (PSSSGSASTPQE) show a composition bias toward polar residues. Residues 95–107 (EQTKEGACEDPHD) show a composition bias toward basic and acidic residues. The CS 1 domain occupies 113–202 (TPELLLDWRQ…VPMLTWPSLL (90 aa)). Residues 234–255 (KAVPPGNDPVSPAMVRSRNPGK) are disordered. Serine 244 carries the phosphoserine modification. The 103-residue stretch at 282–384 (LAFVKNDSYE…RQSQRWGGLE (103 aa)) folds into the CS 2 domain. Residues 390–479 (VGGAKVAVPT…PMPHSPVSGD (90 aa)) are disordered. 2 stretches are compositionally biased toward basic and acidic residues: residues 420-436 (EEAR…RSED) and 447-457 (PMEHVTPKPET). The USP domain occupies 497 to 1214 (TGLVNLGNTC…YAYVLFYRRR (718 aa)). Cysteine 506 (nucleophile) is an active-site residue. 8 residues coordinate Zn(2+): cysteine 791, cysteine 794, cysteine 808, cysteine 811, cysteine 817, cysteine 821, histidine 829, and cysteine 833. Residues 791–833 (CAACQRKQQSEDEKLKRCTRCYRVGYCNQLCQKTHWPDHKGLC) form an MYND-type zinc finger. Histidine 1165 functions as the Proton acceptor in the catalytic mechanism. The span at 1218–1232 (VERPPRAGHSEHHPD) shows a compositional bias: basic and acidic residues. The segment at 1218–1239 (VERPPRAGHSEHHPDLGPAAEA) is disordered. Residues 1292 to 1312 (FVLGTVAALVALVLNVFYPLV) traverse the membrane as a helical segment. At 1313–1318 (SQSRWR) the chain is on the lumenal side.

It belongs to the peptidase C19 family. Interacts with RNF123. Interacts with BIRC2/c-IAP1, BIRC3/c-IAP2 and XIAP/BIRC4. Interacts with HIF1A (via N-terminus). Interacts (via N-terminus) with HSP90AA1; this interaction activates the deubiquitinase activity of USP19.

Its subcellular location is the endoplasmic reticulum membrane. It catalyses the reaction Thiol-dependent hydrolysis of ester, thioester, amide, peptide and isopeptide bonds formed by the C-terminal Gly of ubiquitin (a 76-residue protein attached to proteins as an intracellular targeting signal).. Deubiquitinating enzyme that regulates the degradation of various proteins by removing ubiquitin moieties, thereby preventing their proteasomal degradation. Stabilizes RNF123, which promotes CDKN1B degradation and contributes to cell proliferation. Decreases the levels of ubiquitinated proteins during skeletal muscle formation and acts to repress myogenesis. Modulates transcription of major myofibrillar proteins. Also involved in turnover of endoplasmic-reticulum-associated degradation (ERAD) substrates. Mechanistically, deubiquitinates and thereby stabilizes several E3 ligases involved in the ERAD pathway including SYVN1 or MARCHF6. Regulates the stability of other E3 ligases including BIRC2/c-IAP1 and BIRC3/c-IAP2 by preventing their ubiquitination. Required for cells to mount an appropriate response to hypoxia by rescuing HIF1A from degradation in a non-catalytic manner and by mediating the deubiquitination of FUNDC1. Attenuates mitochondrial damage and ferroptosis by targeting and stabilizing NADPH oxidase 4/NOX4. Negatively regulates TNF-alpha- and IL-1beta-triggered NF-kappa-B activation by hydrolyzing 'Lys-27'- and 'Lys-63'-linked polyubiquitin chains from MAP3K7. Modulates also the protein level and aggregation of polyQ-expanded huntingtin/HTT through HSP90AA1. In Homo sapiens (Human), this protein is Ubiquitin carboxyl-terminal hydrolase 19 (USP19).